A 368-amino-acid polypeptide reads, in one-letter code: Agmatine deiminase (368 aa).

Cysteine 357 serves as the catalytic Amidino-cysteine intermediate.

The protein belongs to the agmatine deiminase family. In terms of assembly, homodimer.

The enzyme catalyses agmatine + H2O = N-carbamoylputrescine + NH4(+). It functions in the pathway amine and polyamine biosynthesis; putrescine biosynthesis via agmatine pathway; N-carbamoylputrescine from agmatine: step 1/1. In terms of biological role, mediates the hydrolysis of agmatine into N-carbamoylputrescine in the arginine decarboxylase (ADC) pathway of putrescine biosynthesis, a basic polyamine. The chain is Agmatine deiminase from Pseudomonas fluorescens (strain ATCC BAA-477 / NRRL B-23932 / Pf-5).